The primary structure comprises 89 residues: Putative defensin-like protein 40 (89 aa).

The N-terminal stretch at 1–26 (MAGIANGVGLLISFMLICGGMPKGHA) is a signal peptide. Intrachain disulfides connect cysteine 33-cysteine 88, cysteine 46-cysteine 69, cysteine 55-cysteine 81, and cysteine 59-cysteine 83.

The protein belongs to the DEFL family.

The protein localises to the secreted. In Arabidopsis thaliana (Mouse-ear cress), this protein is Putative defensin-like protein 40.